Consider the following 1311-residue polypeptide: Clustered mitochondria protein homolog (1311 aa).

A disordered region spans residues 1–46 (MAATNEVIPTSENPSDVSGSSQKLATEETALANGVDHEEEDSGEAG). Residues 7–24 (VIPTSENPSDVSGSSQKL) show a composition bias toward polar residues. One can recognise a Clu domain in the interval 335-579 (DITRTQENYL…RVTPLDITWM (245 aa)). Disordered regions lie at residues 629–691 (ERKR…QERI) and 915–965 (QSQT…VNAS). Over residues 655–691 (EASKSDEPTENGELAKKADESDKDAEPSKPAADQERI) the composition is skewed to basic and acidic residues. The segment covering 915 to 930 (QSQTEAAAAPPTTNGE) has biased composition (polar residues). TPR repeat units lie at residues 1034–1067 (ARVY…SERT), 1076–1109 (LLNY…WKVV), and 1118–1151 (ITTI…CEEV). The segment at 1236–1311 (VSPRVTLGQT…RGGAAAAAGK (76 aa)) is disordered. Polar residues predominate over residues 1242 to 1253 (LGQTQLQPQVGQ). The segment covering 1259-1279 (AGRDSRSSRGLDSRSIDELLK) has biased composition (basic and acidic residues). Basic residues predominate over residues 1289–1303 (KNKKRPGRSNPKRRG).

Belongs to the CLU family. May associate with the eukaryotic translation initiation factor 3 (eIF-3) complex.

Its subcellular location is the cytoplasm. Functionally, mRNA-binding protein involved in proper cytoplasmic distribution of mitochondria. This chain is Clustered mitochondria protein homolog, found in Sclerotinia sclerotiorum (strain ATCC 18683 / 1980 / Ss-1) (White mold).